A 572-amino-acid polypeptide reads, in one-letter code: Urease subunit alpha (572 aa).

One can recognise a Urease domain in the interval 134–572 (GGIDAHVHFI…LPMAQRYFLF (439 aa)). Histidine 139, histidine 141, and lysine 222 together coordinate Ni(2+). At lysine 222 the chain carries N6-carboxylysine. Histidine 224 contacts substrate. Residues histidine 251 and histidine 277 each coordinate Ni(2+). Catalysis depends on histidine 325, which acts as the Proton donor. Aspartate 365 lines the Ni(2+) pocket.

Belongs to the metallo-dependent hydrolases superfamily. Urease alpha subunit family. As to quaternary structure, heterotrimer of UreA (gamma), UreB (beta) and UreC (alpha) subunits. Three heterotrimers associate to form the active enzyme. The cofactor is Ni cation. In terms of processing, carboxylation allows a single lysine to coordinate two nickel ions.

The protein localises to the cytoplasm. The enzyme catalyses urea + 2 H2O + H(+) = hydrogencarbonate + 2 NH4(+). It participates in nitrogen metabolism; urea degradation; CO(2) and NH(3) from urea (urease route): step 1/1. This is Urease subunit alpha from Synechococcus sp. (strain JA-2-3B'a(2-13)) (Cyanobacteria bacterium Yellowstone B-Prime).